Consider the following 644-residue polypeptide: Core protein VP4 (644 aa).

This sequence belongs to the orbivirus VP4 family.

It is found in the virion. In terms of biological role, the VP4 protein is one of the five proteins (with VP1, VP3, VP6 and VP7) which form the inner capsid of the virus. The sequence is that of Core protein VP4 (Segment-4) from Antilocapra americana (Pronghorn).